The chain runs to 683 residues: UvrABC system protein B (683 aa).

Residues 1-29 (MTDTGPLQPDRPDLDRPLSVDAPFEPAGD) form a disordered region. Residues 39-417 (AGFESGAEKQ…PGDYERDHSE (379 aa)) enclose the Helicase ATP-binding domain. 52–59 (GVTGSGKT) provides a ligand contact to ATP. The short motif at 105 to 128 (YYDYYQPEAYVEQTDTYIDKDMSI) is the Beta-hairpin element. In terms of domain architecture, Helicase C-terminal spans 442–604 (QVEDLIERIQ…EPRTIEKPVS (163 aa)). A compositionally biased stretch (basic and acidic residues) spans 587–603 (EFNAEHGHEPRTIEKPV). The segment at 587–620 (EFNAEHGHEPRTIEKPVSETNLPGSSTDTDGVAD) is disordered. The segment covering 604–615 (SETNLPGSSTDT) has biased composition (polar residues). In terms of domain architecture, UVR spans 630-665 (EQLIERLETRMQEAADNLEFELAADIRDRIRELRET).

Belongs to the UvrB family. As to quaternary structure, forms a heterotetramer with UvrA during the search for lesions. Interacts with UvrC in an incision complex.

The protein resides in the cytoplasm. The UvrABC repair system catalyzes the recognition and processing of DNA lesions. A damage recognition complex composed of 2 UvrA and 2 UvrB subunits scans DNA for abnormalities. Upon binding of the UvrA(2)B(2) complex to a putative damaged site, the DNA wraps around one UvrB monomer. DNA wrap is dependent on ATP binding by UvrB and probably causes local melting of the DNA helix, facilitating insertion of UvrB beta-hairpin between the DNA strands. Then UvrB probes one DNA strand for the presence of a lesion. If a lesion is found the UvrA subunits dissociate and the UvrB-DNA preincision complex is formed. This complex is subsequently bound by UvrC and the second UvrB is released. If no lesion is found, the DNA wraps around the other UvrB subunit that will check the other stand for damage. This Natronomonas pharaonis (strain ATCC 35678 / DSM 2160 / CIP 103997 / JCM 8858 / NBRC 14720 / NCIMB 2260 / Gabara) (Halobacterium pharaonis) protein is UvrABC system protein B.